The primary structure comprises 250 residues: Transmembrane ascorbate-dependent reductase CYB561 (250 aa).

An N-acetylmethionine modification is found at Met-1. Residues 1 to 15 (MEHSSASVPAALPYY) are Cytoplasmic-facing. A helical transmembrane segment spans residues 16 to 36 (VAFSQLLGLTVVAVTGAWLGL). The region spanning 18-219 (FSQLLGLTVV…FGVVVLYILA (202 aa)) is the Cytochrome b561 domain. Residues 37–50 (YRGGIAWESSLQFN) lie on the Vesicular side of the membrane. The chain crosses the membrane as a helical span at residues 51–71 (VHPLCMVIGMIFLQGDALLVY). His-52, Arg-72, and Lys-79 together coordinate heme b. Over 72 to 83 (RVFRREAKRTTK) the chain is Cytoplasmic. Residues Lys-79 and Lys-83 each coordinate L-ascorbate. The chain crosses the membrane as a helical span at residues 84–104 (ILHGLLHVFAFIIALVGLVAV). Heme b contacts are provided by residues His-86, 115 to 118 (DLYS), and His-120. Over 105-123 (FDYHKKKGYADLYSLHSWC) the chain is Vesicular. The chain crosses the membrane as a helical span at residues 124–144 (GILVFVLYFVQWLVGFSFFLF). Topologically, residues 145–157 (PGASFSLRSRYRP) are cytoplasmic. Arg-152 is an L-ascorbate binding site. A helical membrane pass occupies residues 158-178 (QHIFFGATIFLFSVGTALLGL). 2 residues coordinate heme b: His-159 and Glu-180. The Vesicular portion of the chain corresponds to 179 to 197 (KEALLFKLGSKYSTFEPEG). The chain crosses the membrane as a helical span at residues 198–218 (VLANVLGLLLVCFGVVVLYIL). Residues 219–250 (AQADWKRPSQAEEQALSMDFKTLTEGDSPSPQ) are Cytoplasmic-facing. Lys-224 serves as a coordination point for heme b. 2 positions are modified to phosphoserine: Ser-246 and Ser-248.

Heme b serves as cofactor. In terms of tissue distribution, abundantly distributed in a number of neuroendocrine tissues.

It localises to the cytoplasmic vesicle. The protein resides in the secretory vesicle. Its subcellular location is the chromaffin granule membrane. It catalyses the reaction monodehydro-L-ascorbate radical(out) + L-ascorbate(in) = monodehydro-L-ascorbate radical(in) + L-ascorbate(out). Transmembrane reductase that uses ascorbate as an electron donor in the cytoplasm and transfers electrons across membranes to reduce monodehydro-L-ascorbate radical in the lumen of secretory vesicles. It is therefore involved the regeneration and homeostasis within secretory vesicles of ascorbate which in turn provides reducing equivalents needed to support the activity of intravesicular enzymes. The polypeptide is Transmembrane ascorbate-dependent reductase CYB561 (Mus musculus (Mouse)).